A 297-amino-acid polypeptide reads, in one-letter code: Protein CANDIDATE G-PROTEIN COUPLED RECEPTOR 8 (297 aa).

Residue Asn-20 is glycosylated (N-linked (GlcNAc...) asparagine). The next 7 membrane-spanning stretches (helical) occupy residues 34–54 (GFLH…YLAY), 70–90 (IMIA…AWCC), 107–127 (LTLF…AFLF), 142–162 (FLIS…FLFG), 180–200 (WGLW…VFLM), 215–235 (FYNY…ASAF), and 242–262 (FGFW…LPLL).

Belongs to the UPF0359 family.

It localises to the membrane. G-protein coupled receptor. Plays a role in plants and microbes interactions. The chain is Protein CANDIDATE G-PROTEIN COUPLED RECEPTOR 8 from Arabidopsis thaliana (Mouse-ear cress).